Reading from the N-terminus, the 1019-residue chain is Collagen alpha-1(VI) chain (1019 aa).

An N-terminal signal peptide occupies residues 1–19 (MGLHDSFLALLLLLGGAWA). The VWFA 1 domain occupies 37-233 (DLFFVLDTSE…LDVEETINNI (197 aa)). Asn-212 carries an N-linked (GlcNAc...) asparagine glycan. The tract at residues 248–588 (FECHPPRGPP…GPPGPVGPPG (341 aa)) is disordered. The segment covering 253 to 262 (PRGPPGPPGD) has biased composition (pro residues). 2 stretches are compositionally biased toward basic and acidic residues: residues 299-332 (KGDKGSRGEKGSRGAKGAKGEKGKRGIDGIDGMK) and 370-380 (GKGEPGEDGKP). Residues 427–436 (ERGPPGSPGD) show a composition bias toward low complexity. Positions 476–478 (RGD) match the Cell attachment site motif. Asn-514 carries an N-linked (GlcNAc...) asparagine glycan. Positions 529 to 531 (RGD) match the Cell attachment site motif. Asn-535 carries an N-linked (GlcNAc...) asparagine glycan. Residues 577 to 588 (RPGPPGPVGPPG) show a composition bias toward pro residues. 2 VWFA domains span residues 613–800 (DLLF…LQNI) and 824–1012 (DIML…YQTV). N-linked (GlcNAc...) asparagine glycans are attached at residues Asn-799 and Asn-887.

The protein belongs to the type VI collagen family. Trimers composed of three different chains: alpha 1(VI), alpha 2(VI), and alpha 3(VI). Post-translationally, prolines at the third position of the tripeptide repeating unit (G-X-Y) are hydroxylated in some or all of the chains.

Its subcellular location is the secreted. The protein localises to the extracellular space. It is found in the extracellular matrix. Functionally, collagen VI acts as a cell-binding protein. This chain is Collagen alpha-1(VI) chain (COL6A1), found in Gallus gallus (Chicken).